We begin with the raw amino-acid sequence, 113 residues long: UPF0342 protein MGAS10750_Spy0713 (113 aa).

Belongs to the UPF0342 family.

This Streptococcus pyogenes serotype M4 (strain MGAS10750) protein is UPF0342 protein MGAS10750_Spy0713.